The chain runs to 1110 residues: Guanylate cyclase 2D (1110 aa).

The first 66 residues, 1–66, serve as a signal peptide directing secretion; sequence MAGLQQGCHP…ADSLSLPAWA (66 aa). Over 67–475 the chain is Extracellular; sequence RETFTLGVLG…PNTLCIRGVQ (409 aa). C121 and C149 are disulfide-bonded. 2 N-linked (GlcNAc...) asparagine glycosylation sites follow: N304 and N374. The chain crosses the membrane as a helical span at residues 476-500; it reads PLGSLLTLTITCVLALVGGFLAYFI. Over 501 to 1110 the chain is Cytoplasmic; that stretch reads RLGLQQLRLL…TGFAKLARVG (610 aa). Residues 529-556 are disordered; that stretch reads TPSRRRPHVDSGSESRSVVDGGSPQSVI. One can recognise a Protein kinase domain in the interval 541–818; the sequence is SESRSVVDGG…PSLDQIYTQF (278 aa). The interval 880–921 is interaction with NCALD; that stretch reads MGTTVEPEYFDQVTIYFSDIVGFTTISALSEPIEVVGFLNDL. The Guanylate cyclase domain maps to 893–1023; it reads TIYFSDIVGF…DTVNTASRME (131 aa).

Belongs to the adenylyl cyclase class-4/guanylyl cyclase family. Interacts (via the catalytic domain) with NCALD. Specifically expressed in a subpopulation of olfactory sensory neurons. Expressed in the cilia of the olfactory epithelium.

The protein resides in the cell projection. It is found in the cilium membrane. The enzyme catalyses GTP = 3',5'-cyclic GMP + diphosphate. Its activity is regulated as follows. Activated by Ca(2+). Activated by NCALD in a Ca(2+)-dependent fashion. In terms of biological role, functions as an olfactory receptor activated by a urine odorant, uroguanylin. Activated as well by the volatile semiochemicals carbon disulfide (CS2) and carbon dioxide (CO2). Has guanylate cyclase activity upon binding of the ligand. Activation of GUCY2D neurons leads to the cGMP-dependent activation of the CNGA3 channels, membrane depolarization and an increase in action potential frequency. Signaling pathways activated by GUCY2D may trigger social behaviors such as acquisition of food preference. The chain is Guanylate cyclase 2D (Gucy2d) from Rattus norvegicus (Rat).